Consider the following 243-residue polypeptide: UPF0246 protein gbs2036 (243 aa).

It belongs to the UPF0246 family.

The sequence is that of UPF0246 protein gbs2036 from Streptococcus agalactiae serotype III (strain NEM316).